Consider the following 577-residue polypeptide: Protein downstream neighbor of son homolog (577 aa).

2 disordered regions span residues 1–67 (MAEL…KRRN) and 328–382 (FTQP…LEEM). The span at 362–375 (ETDEVSDESDEDES) shows a compositional bias: acidic residues.

The protein belongs to the DONSON family. As to quaternary structure, component of the replisome complex.

The protein localises to the nucleus. Its function is as follows. Replisome component that maintains genome stability by protecting stalled or damaged replication forks. After the induction of replication stress, required for the stabilization of stalled replication forks, the efficient activation of the intra-S-phase and G/2M cell-cycle checkpoints and the maintenance of genome stability. In Xenopus tropicalis (Western clawed frog), this protein is Protein downstream neighbor of son homolog.